Here is a 700-residue protein sequence, read N- to C-terminus: Polyribonucleotide nucleotidyltransferase (700 aa).

Mg(2+)-binding residues include D484 and D490. The KH domain occupies 551–610 (PRVIRMVVDPEKIREIIGPGGKTISKIIAETGVKIDIEEDGRLYITASDLRSGERAKQMI). The 69-residue stretch at 620-688 (GEIYLGKVLR…KLGRISLSRK (69 aa)) folds into the S1 motif domain.

The protein belongs to the polyribonucleotide nucleotidyltransferase family. It depends on Mg(2+) as a cofactor.

It localises to the cytoplasm. The enzyme catalyses RNA(n+1) + phosphate = RNA(n) + a ribonucleoside 5'-diphosphate. Involved in mRNA degradation. Catalyzes the phosphorolysis of single-stranded polyribonucleotides processively in the 3'- to 5'-direction. This Thermoanaerobacter sp. (strain X514) protein is Polyribonucleotide nucleotidyltransferase.